Consider the following 297-residue polypeptide: Large ribosomal subunit protein uL18 (297 aa).

Belongs to the universal ribosomal protein uL18 family. As to quaternary structure, component of the large ribosomal subunit (LSU).

The protein localises to the cytoplasm. It localises to the nucleus. Component of the ribosome, a large ribonucleoprotein complex responsible for the synthesis of proteins in the cell. The small ribosomal subunit (SSU) binds messenger RNAs (mRNAs) and translates the encoded message by selecting cognate aminoacyl-transfer RNA (tRNA) molecules. The large subunit (LSU) contains the ribosomal catalytic site termed the peptidyl transferase center (PTC), which catalyzes the formation of peptide bonds, thereby polymerizing the amino acids delivered by tRNAs into a polypeptide chain. The nascent polypeptides leave the ribosome through a tunnel in the LSU and interact with protein factors that function in enzymatic processing, targeting, and the membrane insertion of nascent chains at the exit of the ribosomal tunnel. The chain is Large ribosomal subunit protein uL18 (RpL5) from Aedes aegypti (Yellowfever mosquito).